Consider the following 2275-residue polypeptide: Serine-rich adhesin for platelets (2275 aa).

A signal peptide spans 1 to 89; it reads MSKRQKEFHD…VNMLHDQQAF (89 aa). The tract at residues 90–230 is serine-rich repeat region 1, SRR1; that stretch reads AASDAPLTSE…KTSTTSTSTA (141 aa). The span at 100–111 shows a compositional bias: polar residues; sequence LNTQSETVGNQN. 2 disordered regions span residues 100-229 and 751-2247; these read LNTQ…STST and NSMS…GLLG. Over residues 112-128 the composition is skewed to low complexity; sequence STTIEASTSTADSTSVT. The segment covering 129 to 140 has biased composition (polar residues); the sequence is KNSSSVQTSNSD. The segment covering 150–229 has biased composition (low complexity); it reads VTSTTNSTSN…NKTSTTSTST (80 aa). The interval 231 to 751 is non-repeat region (NRR); the sequence is PVKLRTFSRL…TTFKYEVTRN (521 aa). Composition is skewed to low complexity over residues 752 to 1392 and 1402 to 2218; these read SMSD…LSLS and SNSA…ATSE. The interval 752 to 2236 is serine-rich repeat region 2, SRR2; it reads SMSDSVSTSG…AQSEKRLPDT (1485 aa). The short motif at 2233–2237 is the LPXTG sorting signal element; the sequence is LPDTG. Position 2236 is a pentaglycyl murein peptidoglycan amidated threonine (T2236). Positions 2237-2275 are cleaved as a propeptide — removed by sortase; that stretch reads GDSIKQNGLLGGVMTLLVGLGLMKRKKKKDENDQDDSQA.

It belongs to the serine-rich repeat protein (SRRP) family. Proteolytically cleaved by a metalloprotease. Post-translationally, glycosylated. It is probable that most of the Ser residues in SSR1 and SSR2 are O-GlcNAcylated. Sequential glycosylation by sugar transferases are able to generate complex sugar polymorphisms.

The protein resides in the secreted. The protein localises to the cell wall. Its function is as follows. Mediates binding to human platelets, possibly through a receptor-ligand interaction. Probably associated with virulence in endovascular infection. This is Serine-rich adhesin for platelets (sraP) from Staphylococcus aureus (strain MSSA476).